A 98-amino-acid polypeptide reads, in one-letter code: U-megalopygitoxin(1)-Mo1 (98 aa).

A signal peptide spans 1 to 17 (MYRETFVFCVLLAVVSA).

It belongs to the caterpillar 1 family. Post-translationally, contains 4 disulfide bonds. Expressed by the venom apparatus.

It localises to the secreted. Its function is as follows. Probable toxin. The chain is U-megalopygitoxin(1)-Mo1 from Megalopyge opercularis (Southern flannel moth).